A 610-amino-acid chain; its full sequence is UvrABC system protein C (610 aa).

In terms of domain architecture, GIY-YIG spans 16–94 (SQPGVYRMYD…IKLYQPRYNV (79 aa)). The UVR domain occupies 204–239 (QQVLTQLISRMEEASRLLHFEDAARIRDQIQAVRRV).

It belongs to the UvrC family. In terms of assembly, interacts with UvrB in an incision complex.

It is found in the cytoplasm. The UvrABC repair system catalyzes the recognition and processing of DNA lesions. UvrC both incises the 5' and 3' sides of the lesion. The N-terminal half is responsible for the 3' incision and the C-terminal half is responsible for the 5' incision. The protein is UvrABC system protein C of Yersinia enterocolitica serotype O:8 / biotype 1B (strain NCTC 13174 / 8081).